The primary structure comprises 492 residues: Alpha-2-antiplasmin (492 aa).

Residues 1–22 form the signal peptide; the sequence is MALLWGLLALILSCLSSLCSAQ. Positions 23 to 40 are excised as a propeptide; it reads FSPVSTMEPLDLQLMDGQ. Positions 56–76 are disordered; the sequence is QEPGGQIAPKKAPEDCKLSPT. Cysteines 71 and 144 form a disulfide. Asn-127, Asn-249, Asn-296, Asn-310, and Asn-317 each carry an N-linked (GlcNAc...) asparagine glycan. A disordered region spans residues 433 to 492; the sequence is SVRNPNPGAQPERKEQQDSPDGKDSFQDHKGLPRGDKPFDPDLKLGPPSEEDYAQPSSPK. The segment covering 443–475 has biased composition (basic and acidic residues); sequence PERKEQQDSPDGKDSFQDHKGLPRGDKPFDPDL. The residue at position 485 (Tyr-485) is a Sulfotyrosine.

It belongs to the serpin family. As to quaternary structure, forms protease inhibiting heterodimer with TMPRSS7. Post-translationally, proteolytically cleaved at Pro-31 by both the prolyl endopeptidase FAP form and antiplasmin-cleaving enzyme FAP soluble form to generate mature alpha-2-antiplasmin. Expressed by the liver and secreted in plasma.

The protein resides in the secreted. Serine protease inhibitor. The major targets of this inhibitor are plasmin and trypsin, but it also inactivates matriptase-3/TMPRSS7 and chymotrypsin. In Bos taurus (Bovine), this protein is Alpha-2-antiplasmin (SERPINF2).